A 29-amino-acid chain; its full sequence is Cyclotide mech-7 (29 aa).

The cyclopeptide (Gly-Asp) cross-link spans 1–29; it reads GIPICGETCTIGTCNTPGCTCSWPVCTRD. Disulfide bonds link C5-C19, C9-C21, and C14-C26.

Post-translationally, this is a cyclic peptide. Contains 3 disulfide bonds.

Its function is as follows. Probably participates in a plant defense mechanism (Potential). Binds to and induces leakage in phospholipd membranes, particularly ones containing 1-palmitoyl-2-oleophosphatidylethanolamine (POPE). The chain is Cyclotide mech-7 from Melicytus chathamicus (Chatham Island mahoe).